The sequence spans 99 residues: UPF0125 protein PM0166 (99 aa).

It belongs to the UPF0125 (RnfH) family.

The polypeptide is UPF0125 protein PM0166 (Pasteurella multocida (strain Pm70)).